The following is a 487-amino-acid chain: 1,4-beta-D-glucan cellobiohydrolase CEL6A (487 aa).

A signal peptide spans 1 to 17 (MASKLFLAAALLQGALS). Positions 27–63 (ACAAQWGQCGGQDYTGPTCCQSGSTCVVSNQWYSQCL) constitute a CBM1 domain. 2 cysteine pairs are disulfide-bonded: Cys-35-Cys-52 and Cys-46-Cys-62. A compositionally biased stretch (low complexity) spans 64 to 117 (PGSSNPTTTSRTSTSSSSSTSRTSSSTSRPPSSVPTTPTSVPPTITTTPTTTPT). A disordered region spans residues 64–127 (PGSSNPTTTS…GGSGPGTTAS (64 aa)). Substrate-binding residues include Trp-175 and Asp-177. Asp-216 is a catalytic residue. Asp-262 acts as the Proton donor in catalysis. 6 residues coordinate substrate: His-307, Trp-310, Asn-346, Trp-407, Lys-435, and Glu-439. The active-site Proton acceptor is the Asp-441.

It belongs to the glycosyl hydrolase 6 (cellulase B) family.

The protein resides in the secreted. The catalysed reaction is Hydrolysis of (1-&gt;4)-beta-D-glucosidic linkages in cellulose and cellotetraose, releasing cellobiose from the non-reducing ends of the chains.. In terms of biological role, exoglucanase that plays an important function in biomass degradation by catalyzing the hydrolysis of the non-reducing end beta-1,4-glucosidic linkages in cellulose and cellotetraose to release cellobiose. Shows higher hydrolytic activities on phosphoric acid-swollen cellulose (PSC), beta-glucan, and cellooligosaccharide derivatives than on cellulose, of which the best substrates were cellooligosaccharides. This chain is 1,4-beta-D-glucan cellobiohydrolase CEL6A, found in Pyricularia oryzae (strain 70-15 / ATCC MYA-4617 / FGSC 8958) (Rice blast fungus).